A 132-amino-acid polypeptide reads, in one-letter code: Small ribosomal subunit protein uS8c (132 aa).

Belongs to the universal ribosomal protein uS8 family. Part of the 30S ribosomal subunit.

The protein localises to the plastid. It localises to the chloroplast. Its function is as follows. One of the primary rRNA binding proteins, it binds directly to 16S rRNA central domain where it helps coordinate assembly of the platform of the 30S subunit. This chain is Small ribosomal subunit protein uS8c (rps8), found in Physcomitrium patens (Spreading-leaved earth moss).